We begin with the raw amino-acid sequence, 548 residues long: Leucine-rich repeat LGI family member 3 (548 aa).

The first 30 residues, 1–30, serve as a signal peptide directing secretion; it reads MAGLRARRGPGRRLLVLSTLGFCLMLQVSA. The LRRNT domain occupies 31-64; it reads KRPPKTPPCPPSCSCTRDTAFCVDSKSVPKNLPS. LRR repeat units lie at residues 89 to 110, 113 to 134, and 137 to 158; these read LLQFLLLNSNKFTLIGDNAFIG, HLQYLFIENNDIWALSKFTFRG, and SLTHLSLANNNLQTLPRDIFRP. The LRRCT domain maps to 170 to 220; it reads NALNCDCKVKWLVEWLAHTNTTVAPIYCASPPRFQEHKVQDLPLREFDCIT. Asn189 carries an N-linked (GlcNAc...) asparagine glycan. EAR repeat units follow at residues 222 to 264 and 268 to 310; these read DFVL…KWDY and QLRD…HWDP. A glycan (N-linked (GlcNAc...) asparagine) is linked at Asn311. 5 EAR repeats span residues 314-361, 363-406, 410-453, 455-497, and 501-543; these read RFTK…RWHQ, GFYS…QWSR, QFVA…RWEG, RFSE…QWDE, and KFVR…RHVV.

Interacts with STX1A. Brain.

It localises to the secreted. It is found in the cytoplasmic vesicle. Its subcellular location is the secretory vesicle. The protein resides in the synaptic vesicle. The protein localises to the synapse. It localises to the synaptosome. It is found in the cell projection. Its subcellular location is the axon. In terms of biological role, may participate in the regulation of neuronal exocytosis. In Mus musculus (Mouse), this protein is Leucine-rich repeat LGI family member 3 (Lgi3).